The chain runs to 150 residues: Deoxyuridine 5'-triphosphate nucleotidohydrolase (150 aa).

Substrate-binding positions include arginine 65–glycine 67, asparagine 78, and threonine 82–aspartate 84. The segment at leucine 130–glutamate 150 is disordered.

This sequence belongs to the dUTPase family. Requires Mg(2+) as cofactor.

It carries out the reaction dUTP + H2O = dUMP + diphosphate + H(+). Its pathway is pyrimidine metabolism; dUMP biosynthesis; dUMP from dCTP (dUTP route): step 2/2. Functionally, this enzyme is involved in nucleotide metabolism: it produces dUMP, the immediate precursor of thymidine nucleotides and it decreases the intracellular concentration of dUTP so that uracil cannot be incorporated into DNA. The chain is Deoxyuridine 5'-triphosphate nucleotidohydrolase from Chlorobaculum parvum (strain DSM 263 / NCIMB 8327) (Chlorobium vibrioforme subsp. thiosulfatophilum).